The primary structure comprises 210 residues: MTSSALVPSSAELCPDRTAEVSRTTAETRITVRVNLDGTGAASLHTGIGFFDHMLDQIARHGLIDLQIDCDGDLHIDGHHTVEDVGITLGQAFARAVGDKKGIRRYGHAYVPLDEALSRVVVDFSGRPGLHLHIPFTAGSIGGFDTQLTYEFFQGFVNHAGVTLHIDNLKGINAHHQCETVFKAFARALRAALERDPRAAGVIPSTKGSL.

Belongs to the imidazoleglycerol-phosphate dehydratase family.

Its subcellular location is the cytoplasm. The catalysed reaction is D-erythro-1-(imidazol-4-yl)glycerol 3-phosphate = 3-(imidazol-4-yl)-2-oxopropyl phosphate + H2O. It functions in the pathway amino-acid biosynthesis; L-histidine biosynthesis; L-histidine from 5-phospho-alpha-D-ribose 1-diphosphate: step 6/9. This Acidovorax ebreus (strain TPSY) (Diaphorobacter sp. (strain TPSY)) protein is Imidazoleglycerol-phosphate dehydratase.